A 699-amino-acid chain; its full sequence is MVSMQISDSLKQKAEKCGIALSHYDIDGHLIFADEKTVSTFVELLQPPPKAKGQFDDVLAAFENEPIDYRLNRLDLPPSAEYRYQLTDESNAILLEKILSNLSVLSLPPLPFGYYQLSIFSDTEQYRIRLLISPKTAFQPPVLENKKVWGVNVQLYSLRSEQNWGIGDFGDLAYLIEQSAKQGADYVGINPLHLPYPAVPNWASPYSSSSRRWLNFLYLDIPDLPEFKRCRSVQNWFKREDIQAKIAALRESDCVDYSSILALKLTALEPLFDFFQRSQSVEIVTRRKIFAEYLKNKGEPLLLQGLFNVLDLQEHADHQAEENTIGWLGWRKEWQHLSAAKRKALLKTHHEKIQFFAWLQWLTEEQLSALQNLCKQSGMKLGIYGDLAVNSSRGSADVWSDPDLYCVNASIGAPPDPLGPVGQNWNLPPYNPTVLKARGFAPFIDMLCANMQYFGVLRIDHVMGLFRLWWIPKGKTAADGAYVHYPFDELMAILAIESVRNECLIIGEDLGTVPDEVRWKLNEFQIFSYFVLYFAQRNGEFPRISDYPRNAYATIGTHDVPSLQSFWHCRDLELFNQLGILNGEVLKQKYDQRVMDKQALLNSLHRDNYLPPHYEGDALSMAMHDYLNRMIHYYLAESNSRLIGVQLENLLSQEISFNLPSTSNEYPNWCKKLAQPLAFIFSNEALKTFFVQINQGRNV.

This sequence belongs to the disproportionating enzyme family.

It localises to the cytoplasm. It carries out the reaction Transfers a segment of a (1-&gt;4)-alpha-D-glucan to a new position in an acceptor, which may be glucose or a (1-&gt;4)-alpha-D-glucan.. The sequence is that of 4-alpha-glucanotransferase (malQ) from Haemophilus influenzae (strain ATCC 51907 / DSM 11121 / KW20 / Rd).